Consider the following 122-residue polypeptide: 5'-AMP-activated protein kinase subunit beta-1 (122 aa).

4 positions are modified to phosphoserine: S5, S61, S66, and S73. Positions 33–122 are glycogen-binding domain; the sequence is EVNDKASAQA…TVNNIIQVKK (90 aa). T113 is subject to Phosphothreonine.

The protein belongs to the 5'-AMP-activated protein kinase beta subunit family. As to quaternary structure, AMPK is a heterotrimer of an alpha catalytic subunit (PRKAA1 or PRKAA2), a beta (PRKAB1 or PRKAB2) and a gamma non-catalytic subunits (PRKAG1, PRKAG2 or PRKAG3). Interacts with FNIP1 and FNIP2. Post-translationally, phosphorylated when associated with the catalytic subunit (PRKAA1 or PRKAA2). Phosphorylated by ULK1; leading to negatively regulate AMPK activity and suggesting the existence of a regulatory feedback loop between ULK1 and AMPK.

In terms of biological role, non-catalytic subunit of AMP-activated protein kinase (AMPK), an energy sensor protein kinase that plays a key role in regulating cellular energy metabolism. In response to reduction of intracellular ATP levels, AMPK activates energy-producing pathways and inhibits energy-consuming processes: inhibits protein, carbohydrate and lipid biosynthesis, as well as cell growth and proliferation. AMPK acts via direct phosphorylation of metabolic enzymes, and by longer-term effects via phosphorylation of transcription regulators. Also acts as a regulator of cellular polarity by remodeling the actin cytoskeleton; probably by indirectly activating myosin. Beta non-catalytic subunit acts as a scaffold on which the AMPK complex assembles, via its C-terminus that bridges alpha (PRKAA1 or PRKAA2) and gamma subunits (PRKAG1, PRKAG2 or PRKAG3). The chain is 5'-AMP-activated protein kinase subunit beta-1 (PRKAB1) from Sus scrofa (Pig).